We begin with the raw amino-acid sequence, 277 residues long: Diaminopimelate epimerase (277 aa).

Positions 15 and 74 each coordinate substrate. Catalysis depends on C83, which acts as the Proton donor. Residues 84–85, N159, N194, and 212–213 each bind substrate; these read GN and ER. C221 acts as the Proton acceptor in catalysis. Position 222–223 (222–223) interacts with substrate; the sequence is GT.

It belongs to the diaminopimelate epimerase family. As to quaternary structure, homodimer.

It is found in the cytoplasm. The enzyme catalyses (2S,6S)-2,6-diaminopimelate = meso-2,6-diaminopimelate. Its pathway is amino-acid biosynthesis; L-lysine biosynthesis via DAP pathway; DL-2,6-diaminopimelate from LL-2,6-diaminopimelate: step 1/1. Catalyzes the stereoinversion of LL-2,6-diaminopimelate (L,L-DAP) to meso-diaminopimelate (meso-DAP), a precursor of L-lysine and an essential component of the bacterial peptidoglycan. Involved in the succinylase branch of the diaminopimelate biosynthesis. This is Diaminopimelate epimerase from Corynebacterium glutamicum (strain ATCC 13032 / DSM 20300 / JCM 1318 / BCRC 11384 / CCUG 27702 / LMG 3730 / NBRC 12168 / NCIMB 10025 / NRRL B-2784 / 534).